Consider the following 401-residue polypeptide: Inositol phosphorylceramide synthase catalytic subunit AUR1 (401 aa).

Residues 1 to 41 (MANPFSRWFLSERPPNCHVADLETSLDPHQTLLKVQKYKPA) lie on the Cytoplasmic side of the membrane. Residues 42 to 62 (LSDWVHYIFLGSIMLFVFITN) traverse the membrane as a helical segment. At 63–64 (PA) the chain is on the lumenal side. A helical transmembrane segment spans residues 65 to 85 (PWIFKILFYCFLGTLFIIPAT). Residues 86-87 (SQ) are Cytoplasmic-facing. The chain crosses the membrane as a helical span at residues 88-108 (FFFNALPILTWVALYFTSSYF). The Lumenal segment spans residues 109 to 155 (PDDRRPPITVKVLPAVETILYGDNLSDILATSTNSFLDILAWLPYGL). Residue N132 is glycosylated (N-linked (GlcNAc...) asparagine). A helical transmembrane segment spans residues 156–176 (FHFGAPFVVAAILFVFGPPTV). At 177 to 178 (LQ) the chain is on the cytoplasmic side. The chain crosses the membrane as a helical span at residues 179 to 199 (GYAFAFGYMNLFGVIMQNVFP). Topologically, residues 200-245 (AAPPWYKILYGLQSANYDMHGSPGGLARIDKLLGINMYTTAFSNSS) are lumenal. The chain crosses the membrane as a helical span at residues 246–266 (VIFGAFPSLHSGCATMEALFF). Residues 267–268 (CY) are Cytoplasmic-facing. Residues 269 to 289 (CFPKLKPLFIAYVCWLWWSTM) traverse the membrane as a helical segment. Residues 290–291 (YL) are Lumenal-facing. Residues 292–312 (THHYFVDLMAGSVLSYVIFQY) traverse the membrane as a helical segment. Residues 313-401 (TKYTHLPIVD…SITSLGVKRA (89 aa)) are Cytoplasmic-facing. The disordered stretch occupies residues 374–401 (VSPSLFDGSTSVSRSSATSITSLGVKRA). The span at 382-395 (STSVSRSSATSITS) shows a compositional bias: low complexity. Phosphoserine occurs at positions 392 and 395.

It belongs to the AUR1 family. Component of the inositol phosphorylceramide synthase complex composed of at least AUR1 and KEI1.

It localises to the golgi apparatus. The protein localises to the golgi stack membrane. The catalysed reaction is an N-(2R-hydroxy-very-long-chain fatty acyl)-(R)-4-hydroxysphingoid base + a 1,2-diacyl-sn-glycero-3-phospho-(1D-myo-inositol) = a 1D-myo-inositol-1-phospho-N-[(R)-2-hydroxy-very-long-chain fatty acyl]-(R)-4-hydroxysphingoid base + a 1,2-diacyl-sn-glycerol. Its activity is regulated as follows. Inhibited by aureobasidin A (AbA), khafrefungin and rustmicin. Its function is as follows. Catalytic component of the inositol phosphorylceramide synthase which catalyzes the addition of a phosphorylinositol group onto ceramide to form inositol phosphorylceramide, an essential step in sphingolipid biosynthesis. This Saccharomyces cerevisiae (strain ATCC 204508 / S288c) (Baker's yeast) protein is Inositol phosphorylceramide synthase catalytic subunit AUR1.